Here is a 120-residue protein sequence, read N- to C-terminus: NAD(P)H-quinone oxidoreductase subunit 3 (120 aa).

Transmembrane regions (helical) follow at residues 6–26, 64–84, and 89–109; these read GYDAFLGFLLIAAAVPVLALV, MFALVFVIFDVETVFLYPWAV, and LGLLAFIEALIFIAILLVALA.

It belongs to the complex I subunit 3 family. In terms of assembly, NDH-1 can be composed of about 15 different subunits; different subcomplexes with different compositions have been identified which probably have different functions.

The protein resides in the cellular thylakoid membrane. The catalysed reaction is a plastoquinone + NADH + (n+1) H(+)(in) = a plastoquinol + NAD(+) + n H(+)(out). The enzyme catalyses a plastoquinone + NADPH + (n+1) H(+)(in) = a plastoquinol + NADP(+) + n H(+)(out). Its function is as follows. NDH-1 shuttles electrons from an unknown electron donor, via FMN and iron-sulfur (Fe-S) centers, to quinones in the respiratory and/or the photosynthetic chain. The immediate electron acceptor for the enzyme in this species is believed to be plastoquinone. Couples the redox reaction to proton translocation, and thus conserves the redox energy in a proton gradient. Cyanobacterial NDH-1 also plays a role in inorganic carbon-concentration. The sequence is that of NAD(P)H-quinone oxidoreductase subunit 3 from Synechococcus sp. (strain CC9902).